Consider the following 112-residue polypeptide: Histone H3-4 (112 aa).

Residues 1 to 31 (QTGAKAPRKALANKAARKTAPADGGVKKPHR) form a disordered region.

The protein belongs to the histone H3 family. As to quaternary structure, the nucleosome is a histone octamer containing two molecules each of H2A, H2B, H3 and H4 assembled in one H3-H4 heterotetramer and two H2A-H2B heterodimers. The octamer wraps approximately 147 bp of DNA.

Its subcellular location is the nucleus. It localises to the chromosome. Its function is as follows. Core component of nucleosome. Nucleosomes wrap and compact DNA into chromatin, limiting DNA accessibility to the cellular machineries which require DNA as a template. Histones thereby play a central role in transcription regulation, DNA repair, DNA replication and chromosomal stability. DNA accessibility is regulated via a complex set of post-translational modifications of histones, also called histone code, and nucleosome remodeling. This is Histone H3-4 (H3-4) from Stylonychia lemnae (Ciliate).